A 504-amino-acid chain; its full sequence is GTPase Der (504 aa).

Residues 3 to 166 enclose the EngA-type G 1 domain; sequence PVVALVGRPN…QVLAPLAEKL (164 aa). GTP-binding positions include 9–16, 56–60, and 118–121; these read GRPNVGKS, DTGGI, and NKTD. Residues 171–190 are disordered; it reads VDSDENVADDEQDEWDSDFD. Residues 172–190 show a composition bias toward acidic residues; sequence DSDENVADDEQDEWDSDFD. The EngA-type G 2 domain maps to 216 to 389; sequence IKIAIVGRPN…SIQEAYQCAT (174 aa). Residues 222 to 229, 269 to 273, and 334 to 337 contribute to the GTP site; these read GRPNVGKS, DTAGV, and NKWD. The KH-like domain occupies 390 to 474; that stretch reads KKMTTSMLTR…PIRVLFQEGN (85 aa).

It belongs to the TRAFAC class TrmE-Era-EngA-EngB-Septin-like GTPase superfamily. EngA (Der) GTPase family. As to quaternary structure, associates with the 50S ribosomal subunit.

In terms of biological role, GTPase that plays an essential role in the late steps of ribosome biogenesis. This is GTPase Der from Glaesserella parasuis serovar 5 (strain SH0165) (Haemophilus parasuis).